The chain runs to 134 residues: MPKSYTDELAEWVESRAAKKRRRDEAAVAFLAVRADVEAALASGYALVTIWEHMRETGKVKFSYETFRSHARRHIKAKPADVPAPQAKAAEPAPAPKTPEPRRPKQGGKAEKPAPAAAPTGFTFNPTPDKKDLL.

Residues 74 to 134 (HIKAKPADVP…NPTPDKKDLL (61 aa)) are disordered. Positions 83 to 92 (PAPQAKAAEP) are enriched in low complexity. Basic and acidic residues predominate over residues 99 to 112 (PEPRRPKQGGKAEK).

This Escherichia coli protein is Protein TraK (traK).